The sequence spans 331 residues: Adenosine deaminase (331 aa).

2 residues coordinate Zn(2+): histidine 12 and histidine 14. Positions 14, 16, and 170 each coordinate substrate. Position 197 (histidine 197) interacts with Zn(2+). The active-site Proton donor is the glutamate 200. Aspartate 278 lines the Zn(2+) pocket. Residue aspartate 279 participates in substrate binding.

It belongs to the metallo-dependent hydrolases superfamily. Adenosine and AMP deaminases family. Adenosine deaminase subfamily. It depends on Zn(2+) as a cofactor.

It carries out the reaction adenosine + H2O + H(+) = inosine + NH4(+). The enzyme catalyses 2'-deoxyadenosine + H2O + H(+) = 2'-deoxyinosine + NH4(+). Functionally, catalyzes the hydrolytic deamination of adenosine and 2-deoxyadenosine. The polypeptide is Adenosine deaminase (Shewanella sp. (strain MR-4)).